The following is a 450-amino-acid chain: Asparagine--tRNA ligase (450 aa).

This sequence belongs to the class-II aminoacyl-tRNA synthetase family. As to quaternary structure, homodimer.

The protein resides in the cytoplasm. The enzyme catalyses tRNA(Asn) + L-asparagine + ATP = L-asparaginyl-tRNA(Asn) + AMP + diphosphate + H(+). This Mycoplasmopsis pulmonis (strain UAB CTIP) (Mycoplasma pulmonis) protein is Asparagine--tRNA ligase.